Here is a 161-residue protein sequence, read N- to C-terminus: Crossover junction endodeoxyribonuclease RuvC (161 aa).

Residues Asp-7, Glu-67, and Asp-140 contribute to the active site. 3 residues coordinate Mg(2+): Asp-7, Glu-67, and Asp-140.

The protein belongs to the RuvC family. In terms of assembly, homodimer which binds Holliday junction (HJ) DNA. The HJ becomes 2-fold symmetrical on binding to RuvC with unstacked arms; it has a different conformation from HJ DNA in complex with RuvA. In the full resolvosome a probable DNA-RuvA(4)-RuvB(12)-RuvC(2) complex forms which resolves the HJ. Mg(2+) serves as cofactor.

It is found in the cytoplasm. The enzyme catalyses Endonucleolytic cleavage at a junction such as a reciprocal single-stranded crossover between two homologous DNA duplexes (Holliday junction).. The RuvA-RuvB-RuvC complex processes Holliday junction (HJ) DNA during genetic recombination and DNA repair. Endonuclease that resolves HJ intermediates. Cleaves cruciform DNA by making single-stranded nicks across the HJ at symmetrical positions within the homologous arms, yielding a 5'-phosphate and a 3'-hydroxyl group; requires a central core of homology in the junction. The consensus cleavage sequence is 5'-(A/T)TT(C/G)-3'. Cleavage occurs on the 3'-side of the TT dinucleotide at the point of strand exchange. HJ branch migration catalyzed by RuvA-RuvB allows RuvC to scan DNA until it finds its consensus sequence, where it cleaves and resolves the cruciform DNA. This is Crossover junction endodeoxyribonuclease RuvC from Natranaerobius thermophilus (strain ATCC BAA-1301 / DSM 18059 / JW/NM-WN-LF).